The following is a 273-amino-acid chain: Peptide deformylase 1B, chloroplastic/mitochondrial (273 aa).

A chloroplast and mitochondrion-targeting transit peptide spans 1-56; the sequence is MAVCNCFLQAPPLSRILLPVLSRRATTLSAGYGRLKSTVTFCSTVNRTSPLTSSVR. 2 residues coordinate Fe cation: cysteine 171 and histidine 213. Glutamate 214 is an active-site residue. Position 217 (histidine 217) interacts with Fe cation. Basic and acidic residues predominate over residues 246–261; the sequence is YEEKTGLPSPERVEAR. Positions 246 to 273 are disordered; the sequence is YEEKTGLPSPERVEARQKRKAGVGFGKR. A compositionally biased stretch (basic residues) spans 262–273; it reads QKRKAGVGFGKR.

The protein belongs to the polypeptide deformylase family. Homodimer. The cofactor is Fe(2+). In terms of tissue distribution, expressed in leaves and flowers.

The protein resides in the plastid. The protein localises to the chloroplast stroma. Its subcellular location is the mitochondrion. The catalysed reaction is N-terminal N-formyl-L-methionyl-[peptide] + H2O = N-terminal L-methionyl-[peptide] + formate. Inhibited by actinonin. In terms of biological role, removes the formyl group from the N-terminal Met of newly synthesized proteins. Has a preferred substrate specificity towards the photosystem II (PS II) D1 polypeptide. This is Peptide deformylase 1B, chloroplastic/mitochondrial (PDF1B) from Arabidopsis thaliana (Mouse-ear cress).